A 633-amino-acid chain; its full sequence is RpoH suppressor (633 aa).

The 400-residue stretch at 11–410 folds into the PNPLA domain; sequence LVMKGGITSG…SSNFPIHLFD (400 aa). Helical transmembrane passes span 38 to 58, 133 to 153, and 159 to 179; these read NIGG…AAVG, IAPV…YAVG, and IAAA…FAVL. Residues 41–45 carry the GXSXG motif; it reads GTSAG. Serine 43 functions as the Nucleophile in the catalytic mechanism. Positions 342–380 are disordered; the sequence is ARRESLPGSDGENEAEDTTSDEDEQKTVLDSTEALTTGG. A compositionally biased stretch (acidic residues) spans 352 to 365; sequence GENEAEDTTSDEDE. The active-site Proton acceptor is aspartate 397. Positions 397 to 399 match the DGA/G motif; sequence DGG. The tract at residues 605 to 624 is disordered; sequence EGEKWSGEGPDLTKTAPRPL.

It is found in the cell membrane. This protein is non-essential for R.meliloti growth, but induces a heat-shock response in temperature-sensitive E.coli K165 by elevating levels of sigma 32 (mechanism unknown). The polypeptide is RpoH suppressor (suhR) (Rhizobium meliloti (strain 1021) (Ensifer meliloti)).